The primary structure comprises 334 residues: ATP-dependent kinase YFH7 (334 aa).

30-38 is a binding site for ATP; sequence GHPGSGKST.

It belongs to the YFH7 family.

Functionally, ATP-dependent kinase that could be involved in endoplasmic reticulum membrane assembly. The protein is ATP-dependent kinase YFH7 (YFH7) of Eremothecium gossypii (strain ATCC 10895 / CBS 109.51 / FGSC 9923 / NRRL Y-1056) (Yeast).